A 171-amino-acid chain; its full sequence is Co-chaperone protein HscB homolog (171 aa).

The J domain occupies 2 to 74 (NHFELFGLPN…VSRAEYILSE (73 aa)).

Belongs to the HscB family. Interacts with HscA and stimulates its ATPase activity.

In terms of biological role, co-chaperone involved in the maturation of iron-sulfur cluster-containing proteins. Seems to help targeting proteins to be folded toward HscA. The chain is Co-chaperone protein HscB homolog from Aliivibrio fischeri (strain ATCC 700601 / ES114) (Vibrio fischeri).